Here is a 599-residue protein sequence, read N- to C-terminus: Serine/threonine-protein kinase Nek1 (599 aa).

The Protein kinase domain occupies 4–258 (YEVLEQIGKG…AAELLKHPHL (255 aa)). Residues 10–18 (IGKGAFGSA) and K33 each bind ATP. Residue D129 is the Proton acceptor of the active site. Disordered regions lie at residues 364-386 (SIVK…EPPK), 461-482 (SEDP…PQHC), and 504-542 (DDDD…DTSS). Positions 511–530 (DSSSGRNNAAAAASSRAGSS) are enriched in low complexity.

Belongs to the protein kinase superfamily. NEK Ser/Thr protein kinase family. NIMA subfamily. Expressed in anthers, pistils and leaves.

It catalyses the reaction L-seryl-[protein] + ATP = O-phospho-L-seryl-[protein] + ADP + H(+). It carries out the reaction L-threonyl-[protein] + ATP = O-phospho-L-threonyl-[protein] + ADP + H(+). In terms of biological role, may be involved in plant development processes. This chain is Serine/threonine-protein kinase Nek1, found in Oryza sativa subsp. japonica (Rice).